Here is a 361-residue protein sequence, read N- to C-terminus: MNDSRWTEWRILNTSSGILNVSERHSCPLGFGHYSAVDVCIFETIVIVLLTFLIIAGNLTVIFVFHCAPLLHHYTTSYFIQTMAYADLFVGVSCLVPTLSLLHYSTGIHESLTCQVFGYIISVLKSVSMACLACISVDRYLAITKPLSYNQLVTPCRLRICIILIWIYSCLIFLPSFFGWGKPGYHGDIFEWCATSWLTSAYFTGFIVCLLYAPAALVVCFTYFHIFKICRQHTKEINDRRARFPSHEAAASRDAGHSPDRRYAMVLFRITSVFYMLWLPYIIYFLLESSRVLDNPTLSFLTTWLAISNSFCNCVIYSLSNSVFRLGLRRLSETMCTSCMCVKDKEARDPKPRKRANSCSI.

Residues 1-44 (MNDSRWTEWRILNTSSGILNVSERHSCPLGFGHYSAVDVCIFET) are Extracellular-facing. N-linked (GlcNAc...) asparagine glycosylation is found at N2, N13, and N20. Residues 45-65 (IVIVLLTFLIIAGNLTVIFVF) traverse the membrane as a helical segment. Over 66 to 87 (HCAPLLHHYTTSYFIQTMAYAD) the chain is Cytoplasmic. The helical transmembrane segment at 88–108 (LFVGVSCLVPTLSLLHYSTGI) threads the bilayer. Residues 109-115 (HESLTCQ) lie on the Extracellular side of the membrane. A disulfide bond links C114 and C193. The helical transmembrane segment at 116–136 (VFGYIISVLKSVSMACLACIS) threads the bilayer. At 137 to 159 (VDRYLAITKPLSYNQLVTPCRLR) the chain is on the cytoplasmic side. A helical transmembrane segment spans residues 160–180 (ICIILIWIYSCLIFLPSFFGW). The Extracellular segment spans residues 181–200 (GKPGYHGDIFEWCATSWLTS). The helical transmembrane segment at 201 to 221 (AYFTGFIVCLLYAPAALVVCF) threads the bilayer. Over 222 to 265 (TYFHIFKICRQHTKEINDRRARFPSHEAAASRDAGHSPDRRYAM) the chain is Cytoplasmic. A helical transmembrane segment spans residues 266-286 (VLFRITSVFYMLWLPYIIYFL). Over 287–296 (LESSRVLDNP) the chain is Extracellular. A helical membrane pass occupies residues 297-317 (TLSFLTTWLAISNSFCNCVIY). Residues 318-361 (SLSNSVFRLGLRRLSETMCTSCMCVKDKEARDPKPRKRANSCSI) lie on the Cytoplasmic side of the membrane.

The protein belongs to the G-protein coupled receptor 1 family.

The protein localises to the cell membrane. Functionally, G- protein coupled receptor activated by antipsychotics reserpine leading to an increase in intracellular cAMP and its internalization. May play a role in locomotor activity through modulation of dopamine, NMDA and ADORA2A-induced locomotor activity. These behavioral changes are accompanied by modulation of the dopamine receptor signaling pathway in striatum. Modulates HTT level via cAMP-dependent but PKA independent mechanisms throught activation of RAB39B that translocates HTT to the endoplasmic reticulum, thus avoiding proteasome degradation. The chain is G-protein coupled receptor 52 from Bos taurus (Bovine).